Reading from the N-terminus, the 209-residue chain is Ribosomal RNA large subunit methyltransferase E (209 aa).

Residues Gly60, Trp62, Asp80, Asp96, and Asp121 each contribute to the S-adenosyl-L-methionine site. The active-site Proton acceptor is the Lys161. Basic and acidic residues predominate over residues 182–196 (VQMRKPSSSRDRSRE). The tract at residues 182 to 209 (VQMRKPSSSRDRSREQYLLGRGFRGRSE) is disordered.

The protein belongs to the class I-like SAM-binding methyltransferase superfamily. RNA methyltransferase RlmE family.

The protein localises to the cytoplasm. It catalyses the reaction uridine(2552) in 23S rRNA + S-adenosyl-L-methionine = 2'-O-methyluridine(2552) in 23S rRNA + S-adenosyl-L-homocysteine + H(+). Its function is as follows. Specifically methylates the uridine in position 2552 of 23S rRNA at the 2'-O position of the ribose in the fully assembled 50S ribosomal subunit. The sequence is that of Ribosomal RNA large subunit methyltransferase E from Pseudomonas fluorescens (strain ATCC BAA-477 / NRRL B-23932 / Pf-5).